Here is a 353-residue protein sequence, read N- to C-terminus: MATPVYIVLPSRPDHVVSTAKDHAVQGYTELHPYDPSQTEGRLWIFDNDGYIRLAANHNLVLDVNGGAAKEGNTVLSYPDKKDHAKNQLWVNKDCILHTKLDESFHLGVNDKGQVIITQKKEQRVILRAPASLEKRPSAWERHEGELNVVAVGAGNHDVWGVNHLEHIYHWDGSKWHQIEGAATNISVGLDGTVWCVNKAHEIYRLDRGTNKWSIVPGELVQVSVGNSHNIWGVNHLDAIYKWNADSNSWTFVDGQLTNVSVGHDGTVYGVNRAGNIYHYNGNSWDAVSGELVQIHVANKDLIVGVNKAGHVYRLKHGKDWEKLEGELSWVAVGHGGELWGANSAHNIYKALL.

The 50-residue stretch at 44-93 folds into the Ricin B-type lectin domain; the sequence is WIFDNDGYIRLAANHNLVLDVNGGAAKEGNTVLSYPDKKDHAKNQLWVNK. Tandem repeats lie at residues 138–173, 174–210, 211–247, 248–282, 283–318, and 319–353. The segment at 138–353 is 6 X approximate tandem repeats; sequence SAWERHEGEL…SAHNIYKALL (216 aa).

The protein belongs to the tectonin family.

The protein resides in the cell surface. It is found in the cytoplasmic vesicle membrane. Its function is as follows. Probably involved in bacterial recognition. May be a lectin that function as part of a transmembrane signaling complex during phagocytosis. The sequence is that of Tectonin-2 (TECB) from Physarum polycephalum (Slime mold).